Here is a 392-residue protein sequence, read N- to C-terminus: Ameloblastin (392 aa).

The N-terminal stretch at 1-26 is a signal peptide; it reads MPALKIPLFKMKDMILILCLLKMSSA. Pro-37 bears the Hydroxyproline mark. Phosphoserine is present on Ser-43. 3 disordered regions span residues 86-109, 247-280, and 349-392; these read FPWM…PGQK, TLEF…LADP, and TTLG…FQEP. Residues 97–109 show a composition bias toward low complexity; the sequence is QQPSLQPQQPGQK. The segment covering 359-381 has biased composition (polar residues); that stretch reads VDSTATPDTQHTLMPRNKAQQPQ. Residues 382-392 show a composition bias toward basic and acidic residues; the sequence is IKHDAWHFQEP.

Belongs to the ameloblastin family.

The protein localises to the secreted. Its subcellular location is the extracellular space. The protein resides in the extracellular matrix. Its function is as follows. Involved in the mineralization and structural organization of enamel. The polypeptide is Ameloblastin (AMBN) (Bos taurus (Bovine)).